Reading from the N-terminus, the 471-residue chain is Arginine biosynthesis bifunctional protein ArgJ, mitochondrial (471 aa).

Positions 201, 230, 241, 328, 466, and 471 each coordinate substrate. The active-site Nucleophile is Thr-241.

It belongs to the ArgJ family. Heterodimer of an alpha and a beta chain. Post-translationally, the alpha and beta chains are autoproteolytically processed from a single precursor protein within the mitochondrion.

The protein resides in the mitochondrion matrix. It catalyses the reaction N(2)-acetyl-L-ornithine + L-glutamate = N-acetyl-L-glutamate + L-ornithine. The enzyme catalyses L-glutamate + acetyl-CoA = N-acetyl-L-glutamate + CoA + H(+). It functions in the pathway amino-acid biosynthesis; L-arginine biosynthesis; L-ornithine and N-acetyl-L-glutamate from L-glutamate and N(2)-acetyl-L-ornithine (cyclic): step 1/1. The protein operates within amino-acid biosynthesis; L-arginine biosynthesis; N(2)-acetyl-L-ornithine from L-glutamate: step 1/4. Its function is as follows. Catalyzes two activities which are involved in the cyclic version of arginine biosynthesis: the synthesis of acetylglutamate from glutamate and acetyl-CoA, and of ornithine by transacetylation between acetylornithine and glutamate. This chain is Arginine biosynthesis bifunctional protein ArgJ, mitochondrial, found in Ajellomyces capsulatus (strain NAm1 / WU24) (Darling's disease fungus).